The sequence spans 366 residues: tRNA/tmRNA (uracil-C(5))-methyltransferase (366 aa).

Residues Gln190, Tyr218, Asn223, Glu239, and Asp299 each coordinate S-adenosyl-L-methionine. Residue Cys324 is the Nucleophile of the active site. The Proton acceptor role is filled by Glu358.

It belongs to the class I-like SAM-binding methyltransferase superfamily. RNA M5U methyltransferase family. TrmA subfamily.

It catalyses the reaction uridine(54) in tRNA + S-adenosyl-L-methionine = 5-methyluridine(54) in tRNA + S-adenosyl-L-homocysteine + H(+). It carries out the reaction uridine(341) in tmRNA + S-adenosyl-L-methionine = 5-methyluridine(341) in tmRNA + S-adenosyl-L-homocysteine + H(+). Functionally, dual-specificity methyltransferase that catalyzes the formation of 5-methyluridine at position 54 (m5U54) in all tRNAs, and that of position 341 (m5U341) in tmRNA (transfer-mRNA). The sequence is that of tRNA/tmRNA (uracil-C(5))-methyltransferase from Escherichia coli O157:H7 (strain EC4115 / EHEC).